The following is a 197-amino-acid chain: Inner membrane-spanning protein YciB (197 aa).

Helical transmembrane passes span 36-56, 64-84, 90-110, 135-155, and 162-182; these read IYSA…ALFL, GQWL…TFHS, WKAP…HFIG, LAWI…AFTF, and FKVF…GVYL.

The protein belongs to the YciB family.

The protein resides in the cell inner membrane. Its function is as follows. Plays a role in cell envelope biogenesis, maintenance of cell envelope integrity and membrane homeostasis. The chain is Inner membrane-spanning protein YciB from Pseudomonas putida (strain GB-1).